Reading from the N-terminus, the 241-residue chain is Pyridoxine 5'-phosphate synthase (241 aa).

Asparagine 7 is a binding site for 3-amino-2-oxopropyl phosphate. Position 9–10 (9–10 (DH)) interacts with 1-deoxy-D-xylulose 5-phosphate. A 3-amino-2-oxopropyl phosphate-binding site is contributed by arginine 18. Histidine 43 serves as the catalytic Proton acceptor. 1-deoxy-D-xylulose 5-phosphate contacts are provided by arginine 45 and histidine 50. Catalysis depends on glutamate 70, which acts as the Proton acceptor. Threonine 100 contacts 1-deoxy-D-xylulose 5-phosphate. Catalysis depends on histidine 190, which acts as the Proton donor. 3-amino-2-oxopropyl phosphate contacts are provided by residues glycine 191 and 212 to 213 (GH).

The protein belongs to the PNP synthase family. Homooctamer; tetramer of dimers.

It is found in the cytoplasm. It catalyses the reaction 3-amino-2-oxopropyl phosphate + 1-deoxy-D-xylulose 5-phosphate = pyridoxine 5'-phosphate + phosphate + 2 H2O + H(+). The protein operates within cofactor biosynthesis; pyridoxine 5'-phosphate biosynthesis; pyridoxine 5'-phosphate from D-erythrose 4-phosphate: step 5/5. Functionally, catalyzes the complicated ring closure reaction between the two acyclic compounds 1-deoxy-D-xylulose-5-phosphate (DXP) and 3-amino-2-oxopropyl phosphate (1-amino-acetone-3-phosphate or AAP) to form pyridoxine 5'-phosphate (PNP) and inorganic phosphate. The polypeptide is Pyridoxine 5'-phosphate synthase (Bordetella avium (strain 197N)).